The sequence spans 372 residues: Chaperone protein DnaJ (372 aa).

In terms of domain architecture, J spans 5–69 (DYYEVLGLSK…QKKAQYDQFG (65 aa)). Residues 129–211 (GAEKEISVKK…CGGTGRKVKT (83 aa)) form a CR-type zinc finger. Zn(2+) is bound by residues C142, C145, C159, C162, C185, C188, C199, and C202. CXXCXGXG motif repeat units follow at residues 142-149 (CDTCDGSG), 159-166 (CSTCGGRG), 185-192 (CPDCGGTG), and 199-206 (CSDCGGTG).

It belongs to the DnaJ family. Homodimer. The cofactor is Zn(2+).

Its subcellular location is the cytoplasm. Functionally, participates actively in the response to hyperosmotic and heat shock by preventing the aggregation of stress-denatured proteins and by disaggregating proteins, also in an autonomous, DnaK-independent fashion. Unfolded proteins bind initially to DnaJ; upon interaction with the DnaJ-bound protein, DnaK hydrolyzes its bound ATP, resulting in the formation of a stable complex. GrpE releases ADP from DnaK; ATP binding to DnaK triggers the release of the substrate protein, thus completing the reaction cycle. Several rounds of ATP-dependent interactions between DnaJ, DnaK and GrpE are required for fully efficient folding. Also involved, together with DnaK and GrpE, in the DNA replication of plasmids through activation of initiation proteins. This is Chaperone protein DnaJ from Macrococcus caseolyticus (strain JCSC5402) (Macrococcoides caseolyticum).